We begin with the raw amino-acid sequence, 540 residues long: Protein SOSEKI 3 (540 aa).

The DIX-like oligomerization domain stretch occupies residues lysine 32 to aspartate 123. Disordered regions lie at residues glutamate 147 to asparagine 201 and alanine 219 to glycine 294. 2 stretches are compositionally biased toward low complexity: residues serine 150 to methionine 163 and arginine 185 to proline 194. The segment covering alanine 221 to valine 244 has biased composition (polar residues). Residues threonine 246–threonine 256 are compositionally biased toward acidic residues. A compositionally biased stretch (low complexity) spans asparagine 280–serine 292. The short motif at cysteine 342–glycine 343 is the Association to cell membranes element. The interval lysine 412 to histidine 492 is disordered. Positions serine 418–methionine 437 are enriched in polar residues. The segment covering serine 471 to threonine 482 has biased composition (basic and acidic residues).

This sequence belongs to the SOSEKI family. Homodimer. Forms long polymer filaments with other SOKs proteins polymers (e.g. SOK1, SOK2, SOK3 and SOK4) crucial for polar localization and biological activity. Binds to ANGUSTIFOLIA (AN). As to expression, expressed during embryogenesis and in roots.

The protein localises to the cell membrane. In terms of biological role, SOSEKI proteins (SOK1-5) locally interpret global polarity cues and can influence cell division orientation to coordinate cell polarization relative to body axes, probably by guiding ANGUSTIFOLIA (AN) polarized localization. This Arabidopsis thaliana (Mouse-ear cress) protein is Protein SOSEKI 3.